Here is a 38-residue protein sequence, read N- to C-terminus: U9-ctenitoxin-Pk1a (38 aa).

Disulfide bonds link Cys2–Cys17, Cys9–Cys22, Cys16–Cys36, and Cys24–Cys34.

In terms of tissue distribution, expressed by the venom gland.

Its subcellular location is the secreted. This chain is U9-ctenitoxin-Pk1a, found in Phoneutria keyserlingi (Brazilian wandering spider).